The sequence spans 200 residues: Sperm acrosome developmental regulator (200 aa).

Ser63 is modified (phosphoserine). Basic residues predominate over residues 167 to 183 (QERRRRRRMRSHASHTS). The tract at residues 167 to 200 (QERRRRRRMRSHASHTSRHSESVQGLKHDARSPL) is disordered. Over residues 184–200 (RHSESVQGLKHDARSPL) the composition is skewed to basic and acidic residues.

The protein resides in the cytoplasmic vesicle. Its subcellular location is the secretory vesicle. The protein localises to the acrosome. Functionally, may play an important role in acrosome formation and nucleus shaping during spermiogenesis. In Rattus norvegicus (Rat), this protein is Sperm acrosome developmental regulator (Spacdr).